A 146-amino-acid chain; its full sequence is Large ribosomal subunit protein uL15 (146 aa).

Basic and acidic residues predominate over residues 1–10 (MTLKLHDLRP). Residues 1–41 (MTLKLHDLRPARGSKTARTRVGRGDGSKGKTAGRGTKGTRA) are disordered.

The protein belongs to the universal ribosomal protein uL15 family. As to quaternary structure, part of the 50S ribosomal subunit.

Functionally, binds to the 23S rRNA. In Mycobacterium bovis (strain BCG / Pasteur 1173P2), this protein is Large ribosomal subunit protein uL15.